The chain runs to 83 residues: Keratin-associated protein 21-2 (83 aa).

Interacts with hair keratins.

In terms of biological role, in the hair cortex, hair keratin intermediate filaments are embedded in an interfilamentous matrix, consisting of hair keratin-associated proteins (KRTAP), which are essential for the formation of a rigid and resistant hair shaft through their extensive disulfide bond cross-linking with abundant cysteine residues of hair keratins. The matrix proteins include the high-sulfur and high-glycine-tyrosine keratins. The chain is Keratin-associated protein 21-2 (KRTAP21-2) from Homo sapiens (Human).